Consider the following 82-residue polypeptide: Phosphoribosylformylglycinamidine synthase subunit PurS (82 aa).

The protein belongs to the PurS family. In terms of assembly, homodimer. Part of the FGAM synthase complex composed of 1 PurL, 1 PurQ and 2 PurS subunits.

The protein localises to the cytoplasm. The enzyme catalyses N(2)-formyl-N(1)-(5-phospho-beta-D-ribosyl)glycinamide + L-glutamine + ATP + H2O = 2-formamido-N(1)-(5-O-phospho-beta-D-ribosyl)acetamidine + L-glutamate + ADP + phosphate + H(+). It functions in the pathway purine metabolism; IMP biosynthesis via de novo pathway; 5-amino-1-(5-phospho-D-ribosyl)imidazole from N(2)-formyl-N(1)-(5-phospho-D-ribosyl)glycinamide: step 1/2. In terms of biological role, part of the phosphoribosylformylglycinamidine synthase complex involved in the purines biosynthetic pathway. Catalyzes the ATP-dependent conversion of formylglycinamide ribonucleotide (FGAR) and glutamine to yield formylglycinamidine ribonucleotide (FGAM) and glutamate. The FGAM synthase complex is composed of three subunits. PurQ produces an ammonia molecule by converting glutamine to glutamate. PurL transfers the ammonia molecule to FGAR to form FGAM in an ATP-dependent manner. PurS interacts with PurQ and PurL and is thought to assist in the transfer of the ammonia molecule from PurQ to PurL. This chain is Phosphoribosylformylglycinamidine synthase subunit PurS, found in Thermotoga maritima (strain ATCC 43589 / DSM 3109 / JCM 10099 / NBRC 100826 / MSB8).